Here is a 99-residue protein sequence, read N- to C-terminus: MTKSELIARLAERYPHLVAKDTELAVKTILDAMAVSLASGQRIEIRGFGSFDLNYRPPRTGRNPKSGSSVHVPEKFVPHFKAGKELRERVDTSSMLQEA.

The protein belongs to the bacterial histone-like protein family. Heterodimer of an alpha and a beta chain.

This protein is one of the two subunits of integration host factor, a specific DNA-binding protein that functions in genetic recombination as well as in transcriptional and translational control. The polypeptide is Integration host factor subunit beta (Laribacter hongkongensis (strain HLHK9)).